A 100-amino-acid chain; its full sequence is Aspartyl/glutamyl-tRNA(Asn/Gln) amidotransferase subunit C (100 aa).

This sequence belongs to the GatC family. As to quaternary structure, heterotrimer of A, B and C subunits.

The catalysed reaction is L-glutamyl-tRNA(Gln) + L-glutamine + ATP + H2O = L-glutaminyl-tRNA(Gln) + L-glutamate + ADP + phosphate + H(+). It carries out the reaction L-aspartyl-tRNA(Asn) + L-glutamine + ATP + H2O = L-asparaginyl-tRNA(Asn) + L-glutamate + ADP + phosphate + 2 H(+). Functionally, allows the formation of correctly charged Asn-tRNA(Asn) or Gln-tRNA(Gln) through the transamidation of misacylated Asp-tRNA(Asn) or Glu-tRNA(Gln) in organisms which lack either or both of asparaginyl-tRNA or glutaminyl-tRNA synthetases. The reaction takes place in the presence of glutamine and ATP through an activated phospho-Asp-tRNA(Asn) or phospho-Glu-tRNA(Gln). In Streptococcus mutans serotype c (strain ATCC 700610 / UA159), this protein is Aspartyl/glutamyl-tRNA(Asn/Gln) amidotransferase subunit C.